Here is a 358-residue protein sequence, read N- to C-terminus: 4-hydroxy-3-methylbut-2-en-1-yl diphosphate synthase (flavodoxin) (358 aa).

[4Fe-4S] cluster is bound by residues Cys270, Cys273, Cys305, and Glu312.

Belongs to the IspG family. [4Fe-4S] cluster serves as cofactor.

The enzyme catalyses (2E)-4-hydroxy-3-methylbut-2-enyl diphosphate + oxidized [flavodoxin] + H2O + 2 H(+) = 2-C-methyl-D-erythritol 2,4-cyclic diphosphate + reduced [flavodoxin]. The protein operates within isoprenoid biosynthesis; isopentenyl diphosphate biosynthesis via DXP pathway; isopentenyl diphosphate from 1-deoxy-D-xylulose 5-phosphate: step 5/6. In terms of biological role, converts 2C-methyl-D-erythritol 2,4-cyclodiphosphate (ME-2,4cPP) into 1-hydroxy-2-methyl-2-(E)-butenyl 4-diphosphate. This is 4-hydroxy-3-methylbut-2-en-1-yl diphosphate synthase (flavodoxin) from Vesicomyosocius okutanii subsp. Calyptogena okutanii (strain HA).